The chain runs to 249 residues: Probable transcriptional regulatory protein Dtur_1615 (249 aa).

This sequence belongs to the TACO1 family.

Its subcellular location is the cytoplasm. This Dictyoglomus turgidum (strain DSM 6724 / Z-1310) protein is Probable transcriptional regulatory protein Dtur_1615.